Reading from the N-terminus, the 245-residue chain is Zinc finger protein 575 (245 aa).

The disordered stretch occupies residues 1–67 (MLERGAESAA…PPQRPHRCPD (67 aa)). Positions 36–49 (PSQSAPGPTASAGS) are enriched in low complexity. The segment covering 52 to 63 (RPRRRPPPQRPH) has biased composition (basic residues). 6 consecutive C2H2-type zinc fingers follow at residues 63 to 85 (HRCP…RLAH), 91 to 113 (HPCP…RLTH), 119 to 141 (HPCP…LWTH), 147 to 169 (YPCP…RHTH), 177 to 199 (YPCP…RLCH), and 213 to 240 (HRCS…QVEH).

Belongs to the krueppel C2H2-type zinc-finger protein family.

The protein resides in the nucleus. Its function is as follows. May be involved in transcriptional regulation. This chain is Zinc finger protein 575 (ZNF575), found in Homo sapiens (Human).